Consider the following 385-residue polypeptide: Probable tRNA sulfurtransferase (385 aa).

Residues 57-160 (DGVIERVKKV…RGNAYVFTDK (104 aa)) form the THUMP domain. ATP-binding positions include 180 to 181 (ML), 205 to 206 (YY), Arg-262, Gly-284, and Gln-293.

This sequence belongs to the ThiI family.

The protein localises to the cytoplasm. The enzyme catalyses [ThiI sulfur-carrier protein]-S-sulfanyl-L-cysteine + a uridine in tRNA + 2 reduced [2Fe-2S]-[ferredoxin] + ATP + H(+) = [ThiI sulfur-carrier protein]-L-cysteine + a 4-thiouridine in tRNA + 2 oxidized [2Fe-2S]-[ferredoxin] + AMP + diphosphate. The catalysed reaction is [ThiS sulfur-carrier protein]-C-terminal Gly-Gly-AMP + S-sulfanyl-L-cysteinyl-[cysteine desulfurase] + AH2 = [ThiS sulfur-carrier protein]-C-terminal-Gly-aminoethanethioate + L-cysteinyl-[cysteine desulfurase] + A + AMP + 2 H(+). Its pathway is cofactor biosynthesis; thiamine diphosphate biosynthesis. Its function is as follows. Catalyzes the ATP-dependent transfer of a sulfur to tRNA to produce 4-thiouridine in position 8 of tRNAs, which functions as a near-UV photosensor. Also catalyzes the transfer of sulfur to the sulfur carrier protein ThiS, forming ThiS-thiocarboxylate. This is a step in the synthesis of thiazole, in the thiamine biosynthesis pathway. The sulfur is donated as persulfide by IscS. The protein is Probable tRNA sulfurtransferase of Clostridium perfringens (strain ATCC 13124 / DSM 756 / JCM 1290 / NCIMB 6125 / NCTC 8237 / Type A).